A 573-amino-acid chain; its full sequence is Membrane protein insertase YidC (573 aa).

The helical transmembrane segment at 6 to 26 threads the bilayer; that stretch reads VFLIFAWLMVAALLWMEWGKD. The disordered stretch occupies residues 63-82; that stretch reads PQAGSPAAVPATSTTTATPA. 5 helical membrane-spanning segments follow: residues 355-375, 379-399, 446-466, 488-508, and 524-544; these read FSIM…LHSF, WGWA…PLSA, GGCL…WVLV, PYFI…KLTP, and PLVF…YWVV.

Belongs to the OXA1/ALB3/YidC family. Type 1 subfamily. As to quaternary structure, interacts with the Sec translocase complex via SecD. Specifically interacts with transmembrane segments of nascent integral membrane proteins during membrane integration.

The protein resides in the cell inner membrane. Its function is as follows. Required for the insertion and/or proper folding and/or complex formation of integral membrane proteins into the membrane. Involved in integration of membrane proteins that insert both dependently and independently of the Sec translocase complex, as well as at least some lipoproteins. Aids folding of multispanning membrane proteins. This chain is Membrane protein insertase YidC, found in Xanthomonas campestris pv. campestris (strain 8004).